We begin with the raw amino-acid sequence, 297 residues long: 4-hydroxy-tetrahydrodipicolinate synthase (297 aa).

Residue T46 participates in pyruvate binding. Y134 acts as the Proton donor/acceptor in catalysis. K162 serves as the catalytic Schiff-base intermediate with substrate. I204 serves as a coordination point for pyruvate.

Belongs to the DapA family. In terms of assembly, homotetramer; dimer of dimers.

Its subcellular location is the cytoplasm. The catalysed reaction is L-aspartate 4-semialdehyde + pyruvate = (2S,4S)-4-hydroxy-2,3,4,5-tetrahydrodipicolinate + H2O + H(+). The protein operates within amino-acid biosynthesis; L-lysine biosynthesis via DAP pathway; (S)-tetrahydrodipicolinate from L-aspartate: step 3/4. In terms of biological role, catalyzes the condensation of (S)-aspartate-beta-semialdehyde [(S)-ASA] and pyruvate to 4-hydroxy-tetrahydrodipicolinate (HTPA). The protein is 4-hydroxy-tetrahydrodipicolinate synthase of Stenotrophomonas maltophilia (strain K279a).